The primary structure comprises 294 residues: Aquaporin-B (294 aa).

The interval methionine 1 to proline 31 is disordered. Residues methionine 1 to arginine 42 are Cytoplasmic-facing. Residues glycine 22–proline 31 are compositionally biased toward basic and acidic residues. A helical membrane pass occupies residues tryptophan 43–leucine 63. Residues cysteine 64–proline 79 are Extracellular-facing. The O-linked (GalNAc...) serine glycan is linked to serine 75. Residues valine 80–valine 100 form a helical membrane-spanning segment. Residues serine 101–lysine 123 lie on the Cytoplasmic side of the membrane. The NPA 1 motif lies at asparagine 106–alanine 108. A helical membrane pass occupies residues glycine 124–alanine 144. At threonine 145–asparagine 172 the chain is on the extracellular side. The chain crosses the membrane as a helical span at residues alanine 173–phenylalanine 193. The Cytoplasmic segment spans residues aspartate 194–alanine 224. Residues serine 208–serine 219 form a required for water permeability region. A helical membrane pass occupies residues glycine 225–valine 245. At serine 246–histidine 268 the chain is on the extracellular side. An NPA 2 motif is present at residues asparagine 251–alanine 253. A helical transmembrane segment spans residues tryptophan 269–phenylalanine 289. The Cytoplasmic segment spans residues serine 290–lysine 294.

This sequence belongs to the MIP/aquaporin (TC 1.A.8) family. In terms of processing, glycosylated and non-glycosylated forms exist throughout all developmental stages.

It is found in the cell membrane. Its subcellular location is the cytoplasmic vesicle. Functionally, putatively gated water-specific channel, requiring a cysteine residue within the channel. Impermeable to water, glycerol and urea when expressed in Xenopus oocytes. Not regulated by pH; channels remain impermeable to water at pH 7.4 and 5.2. The protein is Aquaporin-B of Dictyostelium discoideum (Social amoeba).